A 429-amino-acid chain; its full sequence is 4-hydroxyphenylacetate degradation bifunctional isomerase/decarboxylase (429 aa).

Approximate repeat units lie at residues 1–215 (MKGT…RKSF) and 216–429 (PTLP…ETAK). A divalent metal cation-binding residues include E276, E278, and D307.

The protein belongs to the FAH family. Monomer. Mg(2+) is required as a cofactor.

It carries out the reaction (2E,4Z)-5-hydroxypenta-2,4-diene-1,2,5-tricarboxylate = (3E,5R)-5-carboxy-2-oxohept-3-enedioate. The enzyme catalyses (3E,5R)-5-carboxy-2-oxohept-3-enedioate + H(+) = (4Z)-2-oxohept-4-enedioate + CO2. It functions in the pathway aromatic compound metabolism; 4-hydroxyphenylacetate degradation; pyruvate and succinate semialdehyde from 4-hydroxyphenylacetate: step 4/7. Its pathway is aromatic compound metabolism; 4-hydroxyphenylacetate degradation; pyruvate and succinate semialdehyde from 4-hydroxyphenylacetate: step 5/7. Decarboxylates OPET (5-oxo-pent-3-ene-1,2,5-tricarboxylic acid) into HHDD (2-hydroxy-hept-2,4-diene-1,7-dioate) and isomerizes it to OHED (2-oxo-hept-3-ene-1,7-dioate). The polypeptide is 4-hydroxyphenylacetate degradation bifunctional isomerase/decarboxylase (hpaG) (Escherichia coli).